A 368-amino-acid polypeptide reads, in one-letter code: Cytochrome b (368 aa).

4 helical membrane passes run 32 to 52 (FGFLVAMTFVLQIITGITLAF), 76 to 98 (WEFRMLHATTASFVFLCILIHMT), 112 to 132 (AWMSGLVLYLLTIATAFLGYV), and 174 to 194 (FFVLHFILPFIGCIIIVLHIF). Residues His-82 and His-96 each coordinate heme b. His-178 and His-192 together coordinate heme b. His-197 provides a ligand contact to a ubiquinone. Transmembrane regions (helical) follow at residues 219–239 (MLMTDAKCLSYLIGLIFLQAA), 285–305 (GLLVFMSSLINLGLLSEIRAL), 323–343 (GWVIIWVYSMIFLIIIGSAIP), and 347–367 (YILYGRLATILYLTTGLVLCL).

Belongs to the cytochrome b family. As to quaternary structure, the main subunits of complex b-c1 are: cytochrome b, cytochrome c1 and the Rieske protein. Heme b serves as cofactor.

It localises to the mitochondrion inner membrane. Component of the ubiquinol-cytochrome c reductase complex (complex III or cytochrome b-c1 complex) that is part of the mitochondrial respiratory chain. The b-c1 complex mediates electron transfer from ubiquinol to cytochrome c. Contributes to the generation of a proton gradient across the mitochondrial membrane that is then used for ATP synthesis. This Toxoplasma gondii protein is Cytochrome b (MT-CYB).